The following is a 602-amino-acid chain: Chaperone protein DnaK (602 aa).

A Phosphothreonine; by autocatalysis modification is found at threonine 199.

This sequence belongs to the heat shock protein 70 family.

Functionally, acts as a chaperone. This is Chaperone protein DnaK from Carsonella ruddii (strain PV).